The primary structure comprises 365 residues: 3-dehydroquinate synthase (365 aa).

NAD(+) is bound by residues 107 to 111, 131 to 132, lysine 144, and lysine 153; these read GVIGD and TS. Residues glutamate 186, histidine 251, and histidine 268 each contribute to the Zn(2+) site.

This sequence belongs to the sugar phosphate cyclases superfamily. Dehydroquinate synthase family. Co(2+) is required as a cofactor. Zn(2+) serves as cofactor. It depends on NAD(+) as a cofactor.

Its subcellular location is the cytoplasm. The enzyme catalyses 7-phospho-2-dehydro-3-deoxy-D-arabino-heptonate = 3-dehydroquinate + phosphate. It participates in metabolic intermediate biosynthesis; chorismate biosynthesis; chorismate from D-erythrose 4-phosphate and phosphoenolpyruvate: step 2/7. Functionally, catalyzes the conversion of 3-deoxy-D-arabino-heptulosonate 7-phosphate (DAHP) to dehydroquinate (DHQ). The protein is 3-dehydroquinate synthase of Crocosphaera subtropica (strain ATCC 51142 / BH68) (Cyanothece sp. (strain ATCC 51142)).